The sequence spans 538 residues: MEIKEISVPQQGVVADYMNGKKEIQSCFDYMLTEDAFKQRVQDLREREFFRQDLVAHLLEYNTKLQAGEATIQNVKALGDEDTYVVIAGQQAGLLTGPLYTIHKIISVLQLAKEKEESLGVKVVPVFWIAGEDHDMDEINHTFVTKNKKIKKTIFHDRNPKKASASESELSLEDCRKWIEEIFKTYPETNFTKDVLQFIDDSLGESNTYVDFFGHLIMKMFINSGLILVDSHHPELRKLEVPFFKQIISKYKEVQEGLHNQQEVIKELGYKPIIETKSNAVHIFMEIDNERVLLEDNQGKFVGKDGTYSFSYEELIEEMERSPERFSNNVVTRPLMQEYVFPTLAFIGGPGELAYWSELQQVFHTIGFRMPPVVPRITITYIERDIATDLHDLQLQESDPFLNNVDKLRENWLSNQIEEPIDERFVEAKKEIIDIHKSLQQFVKKIDPGLSSFAGKNEFKINEQIELLERMLKRNVEKKHEVELNKFRRIQFAIRPLGAPQERVWNVCYYLNQFGLDFVDRVMENSFSWNGKHHVIKL.

Residues 460 to 484 (KINEQIELLERMLKRNVEKKHEVEL) adopt a coiled-coil conformation.

Belongs to the BshC family.

In terms of biological role, involved in bacillithiol (BSH) biosynthesis. May catalyze the last step of the pathway, the addition of cysteine to glucosamine malate (GlcN-Mal) to generate BSH. The sequence is that of Putative cysteine ligase BshC from Bacillus cereus (strain ATCC 10987 / NRS 248).